Reading from the N-terminus, the 235-residue chain is MHTNTEPTQSSDLALLGLMQLISPALPIGAFAWSQGLESAFELGWVTNEQQLGEWLEGVLDDGLTRCELPVLARLQNCWAKSDSEGLSYWNDWLHANRETAELSDEDTRLGLALMRLLNSLQLQPQIEQGHAALPQDPGYVTVFAWLAQQRQIPVRQSLLGFVWGWLENQLAVACKAMPLGHTAAQRLIEQLRPKMVIAIDTALALADDQLGPIMPGLALGSAQHETQYSRLFRS.

It belongs to the UreF family. In terms of assembly, ureD, UreF and UreG form a complex that acts as a GTP-hydrolysis-dependent molecular chaperone, activating the urease apoprotein by helping to assemble the nickel containing metallocenter of UreC. The UreE protein probably delivers the nickel.

Its subcellular location is the cytoplasm. Required for maturation of urease via the functional incorporation of the urease nickel metallocenter. This chain is Urease accessory protein UreF, found in Pseudoalteromonas translucida (strain TAC 125).